The chain runs to 129 residues: Histone H2B.2 (129 aa).

Positions 1-19 are enriched in basic and acidic residues; sequence MAPKAEKKPASKAPAEKKP. Residues 1 to 38 form a disordered region; sequence MAPKAEKKPASKAPAEKKPAAKKTATSGTKKRSKTRKE. An N6-acetyllysine; alternate mark is found at K7 and K8. Residues K7 and K8 each participate in a glycyl lysine isopeptide (Lys-Gly) (interchain with G-Cter in SUMO); alternate cross-link. The residue at position 11 (S11) is a Phosphoserine. K12 bears the N6-acetyllysine mark. K17 bears the N6-acetyllysine; alternate mark. A Glycyl lysine isopeptide (Lys-Gly) (interchain with G-Cter in SUMO); alternate cross-link involves residue K17. K18 participates in a covalent cross-link: Glycyl lysine isopeptide (Lys-Gly) (interchain with G-Cter in SUMO). A Glycyl lysine isopeptide (Lys-Gly) (interchain with G-Cter in ubiquitin) cross-link involves residue K123.

The protein belongs to the histone H2B family. As to quaternary structure, the nucleosome is a histone octamer containing two molecules each of H2A, H2B, H3 and H4 assembled in one H3-H4 heterotetramer and two H2A-H2B heterodimers. The octamer wraps approximately 147 bp of DNA. Monoubiquitinated by the UBC2-BRE1 complex to form H2BK123ub1. H2BK123ub1 gives a specific tag for epigenetic transcriptional activation and is also prerequisite for H3K4me and H3K79me formation. H2BK123ub1 also modulates the formation of double-strand breaks during meiosis and is a prerequisite for DNA-damage checkpoint activation. Post-translationally, phosphorylated by STE20 to form H2BS10ph during progression through meiotic prophase. May be correlated with chromosome condensation. In terms of processing, acetylated by GCN5 to form H2BK11ac and H2BK16ac. H2BK16ac can also be formed by ESA1. Acetylation of N-terminal lysines and particularly formation of H2BK11acK16ac has a positive effect on transcription. Sumoylation to form H2BK6su or H2BK7su, and probably also H2BK16su or H2BK17su, occurs preferentially near the telomeres and represses gene transcription.

The protein localises to the nucleus. The protein resides in the chromosome. Functionally, core component of nucleosome. Nucleosomes wrap and compact DNA into chromatin, limiting DNA accessibility to the cellular machineries which require DNA as a template. Histones thereby play a central role in transcription regulation, DNA repair, DNA replication and chromosomal stability. DNA accessibility is regulated via a complex set of post-translational modifications of histones, also called histone code, and nucleosome remodeling. In Debaryomyces hansenii (strain ATCC 36239 / CBS 767 / BCRC 21394 / JCM 1990 / NBRC 0083 / IGC 2968) (Yeast), this protein is Histone H2B.2 (HTB2).